Consider the following 360-residue polypeptide: Mitogen-activated protein kinase 14 (360 aa).

At Ser-2 the chain carries N-acetylserine. Residue Ser-2 is modified to Phosphoserine. Thr-16 carries the post-translational modification Phosphothreonine. A Protein kinase domain is found at 24-308 (YQNLSPVGSG…AAQALAHAYF (285 aa)). ATP contacts are provided by residues 30-38 (VGSGAYGSV) and Lys-53. Lys-53 is modified (N6-acetyllysine). Residue Asp-150 is the Proton acceptor of the active site. Residue Lys-152 is modified to N6-acetyllysine. Thr-180 carries the phosphothreonine modification. Positions 180–182 (TGY) match the TXY motif. The residue at position 182 (Tyr-182) is a Phosphotyrosine. At Tyr-323 the chain carries Phosphotyrosine; by ZAP70.

Belongs to the protein kinase superfamily. CMGC Ser/Thr protein kinase family. MAP kinase subfamily. As to quaternary structure, component of a signaling complex containing at least AKAP13, PKN1, MAPK14, ZAK and MAP2K3. Within this complex, AKAP13 interacts directly with PKN1, which in turn recruits MAPK14, MAP2K3 and ZAK. Binds to a kinase interaction motif within the protein tyrosine phosphatase, PTPRR. This interaction retains MAPK14 in the cytoplasm and prevents nuclear accumulation. Interacts with SPAG9 and GADD45A. Interacts with CDC25B, CDC25C, DUSP1, DUSP10, DUSP16, NP60, SUPT20H and TAB1. Interacts with casein kinase II subunits CSNK2A1 and CSNK2B. Interacts with PPM1D. Interacts with CDK5RAP3; recruits PPM1D to MAPK14 and may regulate its dephosphorylation. Interacts with DUSP2; this interaction does not lead to catalytic activation of DUSP2 and dephosphrylation of MAPK14. Mg(2+) serves as cofactor. In terms of processing, dually phosphorylated on Thr-180 and Tyr-182 by the MAP2Ks MAP2K3/MKK3, MAP2K4/MKK4 and MAP2K6/MKK6 in response to inflammatory cytokines, environmental stress or growth factors, which activates the enzyme. Dual phosphorylation can also be mediated by TAB1-mediated autophosphorylation. TCR engagement in T-cells also leads to Tyr-323 phosphorylation by ZAP70. Dephosphorylated and inactivated by DUPS1, DUSP10 and DUSP16. PPM1D also mediates dephosphorylation and inactivation of MAPK14. Post-translationally, acetylated at Lys-53 and Lys-152 by KAT2B and EP300. Acetylation at Lys-53 increases the affinity for ATP and enhances kinase activity. Lys-53 and Lys-152 are deacetylated by HDAC3. Ubiquitinated. Ubiquitination leads to degradation by the proteasome pathway.

The protein localises to the cytoplasm. It is found in the nucleus. The enzyme catalyses L-seryl-[protein] + ATP = O-phospho-L-seryl-[protein] + ADP + H(+). The catalysed reaction is L-threonyl-[protein] + ATP = O-phospho-L-threonyl-[protein] + ADP + H(+). Activated by cell stresses such as DNA damage, heat shock, osmotic shock, anisomycin and sodium arsenite, as well as pro-inflammatory stimuli such as bacterial lipopolysaccharide (LPS) and interleukin-1. Activation occurs through dual phosphorylation of Thr-180 and Tyr-182 by either of two dual specificity kinases, MAP2K3/MKK3 or MAP2K6/MKK6, and potentially also MAP2K4/MKK4, as well as by TAB1-mediated autophosphorylation. MAPK14 phosphorylated on both Thr-180 and Tyr-182 is 10-20-fold more active than MAPK14 phosphorylated only on Thr-180, whereas MAPK14 phosphorylated on Tyr-182 alone is inactive. whereas Thr-180 is necessary for catalysis, Tyr-182 may be required for auto-activation and substrate recognition. Phosphorylated at Tyr-323 by ZAP70 in an alternative activation pathway in response to TCR signaling in T-cells. This alternative pathway is inhibited by GADD45A. Inhibited by dual specificity phosphatases, such as DUSP1, DUSP10, and DUSP16. Specifically inhibited by the binding of pyridinyl-imidazole compounds, which are cytokine-suppressive anti-inflammatory drugs (CSAID). SB203580 is an inhibitor of MAPK14. In terms of biological role, serine/threonine kinase which acts as an essential component of the MAP kinase signal transduction pathway. MAPK14 is one of the four p38 MAPKs which play an important role in the cascades of cellular responses evoked by extracellular stimuli such as pro-inflammatory cytokines or physical stress leading to direct activation of transcription factors. Accordingly, p38 MAPKs phosphorylate a broad range of proteins and it has been estimated that they may have approximately 200 to 300 substrates each. Some of the targets are downstream kinases which are activated through phosphorylation and further phosphorylate additional targets. RPS6KA5/MSK1 and RPS6KA4/MSK2 can directly phosphorylate and activate transcription factors such as CREB1, ATF1, the NF-kappa-B isoform RELA/NFKB3, STAT1 and STAT3, but can also phosphorylate histone H3 and the nucleosomal protein HMGN1. RPS6KA5/MSK1 and RPS6KA4/MSK2 play important roles in the rapid induction of immediate-early genes in response to stress or mitogenic stimuli, either by inducing chromatin remodeling or by recruiting the transcription machinery. On the other hand, two other kinase targets, MAPKAPK2/MK2 and MAPKAPK3/MK3, participate in the control of gene expression mostly at the post-transcriptional level, by phosphorylating ZFP36 (tristetraprolin) and ELAVL1, and by regulating EEF2K, which is important for the elongation of mRNA during translation. MKNK1/MNK1 and MKNK2/MNK2, two other kinases activated by p38 MAPKs, regulate protein synthesis by phosphorylating the initiation factor EIF4E2. MAPK14 also interacts with casein kinase II, leading to its activation through autophosphorylation and further phosphorylation of TP53/p53. In the cytoplasm, the p38 MAPK pathway is an important regulator of protein turnover. For example, CFLAR is an inhibitor of TNF-induced apoptosis whose proteasome-mediated degradation is regulated by p38 MAPK phosphorylation. In a similar way, MAPK14 phosphorylates the ubiquitin ligase SIAH2, regulating its activity towards EGLN3. MAPK14 may also inhibit the lysosomal degradation pathway of autophagy by interfering with the intracellular trafficking of the transmembrane protein ATG9. Another function of MAPK14 is to regulate the endocytosis of membrane receptors by different mechanisms that impinge on the small GTPase RAB5A. In addition, clathrin-mediated EGFR internalization induced by inflammatory cytokines and UV irradiation depends on MAPK14-mediated phosphorylation of EGFR itself as well as of RAB5A effectors. Ectodomain shedding of transmembrane proteins is regulated by p38 MAPKs as well. In response to inflammatory stimuli, p38 MAPKs phosphorylate the membrane-associated metalloprotease ADAM17. Such phosphorylation is required for ADAM17-mediated ectodomain shedding of TGF-alpha family ligands, which results in the activation of EGFR signaling and cell proliferation. Another p38 MAPK substrate is FGFR1. FGFR1 can be translocated from the extracellular space into the cytosol and nucleus of target cells, and regulates processes such as rRNA synthesis and cell growth. FGFR1 translocation requires p38 MAPK activation. In the nucleus, many transcription factors are phosphorylated and activated by p38 MAPKs in response to different stimuli. Classical examples include ATF1, ATF2, ATF6, ELK1, PTPRH, DDIT3, TP53/p53 and MEF2C and MEF2A. The p38 MAPKs are emerging as important modulators of gene expression by regulating chromatin modifiers and remodelers. The promoters of several genes involved in the inflammatory response, such as IL6, IL8 and IL12B, display a p38 MAPK-dependent enrichment of histone H3 phosphorylation on 'Ser-10' (H3S10ph) in LPS-stimulated myeloid cells. This phosphorylation enhances the accessibility of the cryptic NF-kappa-B-binding sites marking promoters for increased NF-kappa-B recruitment. Phosphorylates CDC25B and CDC25C which is required for binding to 14-3-3 proteins and leads to initiation of a G2 delay after ultraviolet radiation. Phosphorylates TIAR following DNA damage, releasing TIAR from GADD45A mRNA and preventing mRNA degradation. The p38 MAPKs may also have kinase-independent roles, which are thought to be due to the binding to targets in the absence of phosphorylation. Protein O-Glc-N-acylation catalyzed by the OGT is regulated by MAPK14, and, although OGT does not seem to be phosphorylated by MAPK14, their interaction increases upon MAPK14 activation induced by glucose deprivation. This interaction may regulate OGT activity by recruiting it to specific targets such as neurofilament H, stimulating its O-Glc-N-acylation. Required in mid-fetal development for the growth of embryo-derived blood vessels in the labyrinth layer of the placenta. Also plays an essential role in developmental and stress-induced erythropoiesis, through regulation of EPO gene expression. Phosphorylates S100A9 at 'Thr-113'. This is Mitogen-activated protein kinase 14 from Rattus norvegicus (Rat).